The following is a 279-amino-acid chain: Cyanocobalamin reductase / alkylcobalamin dealkylase (279 aa).

Residues D104, 115–118 (ILAQ), 129–131 (YYQ), C149, and I160 contribute to the substrate site. A disordered region spans residues 239-279 (PSEHPSTTSELPLSLLTKPQNSRRARSWLSPSVSPPVSPGP). The segment covering 243–257 (PSTTSELPLSLLTKP) has biased composition (low complexity). Phosphoserine is present on residues S247, S272, and S276.

The protein belongs to the MMACHC family. As to quaternary structure, monomer in the absence of bound substrate. Homodimer; dimerization is triggered by binding to FMN or adenosylcobalamin. Interacts with LMBRD1 and ABCD4; the interaction ensures the transport of cobalamin from the lysosome to the cytoplasm. Forms a multiprotein complex with MMADHC, MTR and MTRR; the interaction with MTR could modulate MMACHC-dependent processing of cobalamin. Heterodimer with MMADHC; the interaction might play a role in the regulation of the balance between AdoCbl and MeCbl synthesis. FAD is required as a cofactor. It depends on FMN as a cofactor. In terms of tissue distribution, detected in liver and kidney (at protein level). Detected in embryos.

The protein resides in the cytoplasm. Its subcellular location is the cytosol. The enzyme catalyses 2 cob(II)alamin-[cyanocobalamin reductase] + 2 hydrogen cyanide + NADP(+) = 2 cyanocob(III)alamin + 2 apo-[cyanocobalamin reductase] + NADPH + H(+). The catalysed reaction is apo-[alkylcobalamin reductase] + an R-cob(III)alamin + glutathione = cob(I)alamin-[alkylcobalamin reductase] + an S-substituted glutathione + H(+). It catalyses the reaction apo-[alkylcobalamin reductase] + methylcob(III)alamin + glutathione = S-methyl glutathione + cob(I)alamin-[alkylcobalamin reductase] + H(+). It carries out the reaction apo-[alkylcobalamin reductase] + adenosylcob(III)alamin + glutathione = S-adenosylglutathione + cob(I)alamin-[alkylcobalamin reductase] + H(+). Functionally, cobalamin (vitamin B12) cytosolic chaperone that catalyzes the reductive decyanation of cyanocob(III)alamin (cyanocobalamin, CNCbl) to yield cob(II)alamin and cyanide, using FAD or FMN as cofactors and NADPH as cosubstrate. Cyanocobalamin constitutes the inactive form of vitamin B12 introduced from the diet, and is converted into the active cofactors methylcobalamin (MeCbl) involved in methionine biosynthesis, and 5'-deoxyadenosylcobalamin (AdoCbl) involved in the TCA cycle. Forms a complex with the lysosomal transporter ABCD4 and its chaperone LMBRD1, to transport cobalamin across the lysosomal membrane into the cytosol. The processing of cobalamin in the cytosol occurs in a multiprotein complex composed of at least MMACHC, MMADHC, MTRR (methionine synthase reductase) and MTR (methionine synthase) which may contribute to shuttle safely and efficiently cobalamin towards MTR in order to produce methionine. Also acts as a glutathione transferase by catalyzing the dealkylation of the alkylcob(III)alamins MeCbl and AdoCbl, using the thiolate of glutathione for nucleophilic displacement to generate cob(I)alamin and the corresponding glutathione thioether. The conversion of incoming MeCbl or AdoCbl into a common intermediate cob(I)alamin is necessary to meet the cellular needs for both cofactors. Cysteine and homocysteine cannot substitute for glutathione in this reaction. The chain is Cyanocobalamin reductase / alkylcobalamin dealkylase from Mus musculus (Mouse).